The following is a 185-amino-acid chain: Large ribosomal subunit protein uL5 (185 aa).

It belongs to the universal ribosomal protein uL5 family. As to quaternary structure, part of the 50S ribosomal subunit; part of the 5S rRNA/L5/L18/L25 subcomplex. Contacts the 5S rRNA and the P site tRNA. Forms a bridge to the 30S subunit in the 70S ribosome.

Functionally, this is one of the proteins that bind and probably mediate the attachment of the 5S RNA into the large ribosomal subunit, where it forms part of the central protuberance. In the 70S ribosome it contacts protein S13 of the 30S subunit (bridge B1b), connecting the 2 subunits; this bridge is implicated in subunit movement. Contacts the P site tRNA; the 5S rRNA and some of its associated proteins might help stabilize positioning of ribosome-bound tRNAs. This is Large ribosomal subunit protein uL5 from Azorhizobium caulinodans (strain ATCC 43989 / DSM 5975 / JCM 20966 / LMG 6465 / NBRC 14845 / NCIMB 13405 / ORS 571).